The following is a 375-amino-acid chain: Histidine biosynthesis bifunctional protein HisB (375 aa).

Residues 1–168 (MTPIVFIDRD…GIAHTLADAP (168 aa)) form a histidinol-phosphatase region. Aspartate 8 functions as the Nucleophile in the catalytic mechanism. Mg(2+) is bound by residues aspartate 8, aspartate 10, and aspartate 128. The Proton donor role is filled by aspartate 10. The segment at 169 to 375 (RRAVVQRHTK…HVLPSTKGAL (207 aa)) is imidazoleglycerol-phosphate dehydratase.

The protein in the N-terminal section; belongs to the histidinol-phosphatase family. In the C-terminal section; belongs to the imidazoleglycerol-phosphate dehydratase family. Mg(2+) serves as cofactor.

The protein resides in the cytoplasm. It catalyses the reaction D-erythro-1-(imidazol-4-yl)glycerol 3-phosphate = 3-(imidazol-4-yl)-2-oxopropyl phosphate + H2O. The enzyme catalyses L-histidinol phosphate + H2O = L-histidinol + phosphate. It participates in amino-acid biosynthesis; L-histidine biosynthesis; L-histidine from 5-phospho-alpha-D-ribose 1-diphosphate: step 6/9. Its pathway is amino-acid biosynthesis; L-histidine biosynthesis; L-histidine from 5-phospho-alpha-D-ribose 1-diphosphate: step 8/9. In Xylella fastidiosa (strain 9a5c), this protein is Histidine biosynthesis bifunctional protein HisB.